Here is a 366-residue protein sequence, read N- to C-terminus: Ribosomal RNA large subunit methyltransferase M (366 aa).

S-adenosyl-L-methionine is bound by residues S187, 220-223 (SPGG), D239, D259, and D276. The active-site Proton acceptor is the K305.

It belongs to the class I-like SAM-binding methyltransferase superfamily. RNA methyltransferase RlmE family. RlmM subfamily. In terms of assembly, monomer.

The protein localises to the cytoplasm. The enzyme catalyses cytidine(2498) in 23S rRNA + S-adenosyl-L-methionine = 2'-O-methylcytidine(2498) in 23S rRNA + S-adenosyl-L-homocysteine + H(+). Its function is as follows. Catalyzes the 2'-O-methylation at nucleotide C2498 in 23S rRNA. The protein is Ribosomal RNA large subunit methyltransferase M of Tolumonas auensis (strain DSM 9187 / NBRC 110442 / TA 4).